A 317-amino-acid polypeptide reads, in one-letter code: Aspartate carbamoyltransferase catalytic subunit (317 aa).

Arg-65 and Thr-66 together coordinate carbamoyl phosphate. L-aspartate is bound at residue Lys-93. Carbamoyl phosphate-binding residues include Arg-115, His-145, and Gln-148. Residues Arg-178 and Arg-233 each coordinate L-aspartate. Carbamoyl phosphate is bound by residues Gly-274 and Pro-275.

This sequence belongs to the aspartate/ornithine carbamoyltransferase superfamily. ATCase family. As to quaternary structure, heterododecamer (2C3:3R2) of six catalytic PyrB chains organized as two trimers (C3), and six regulatory PyrI chains organized as three dimers (R2).

The enzyme catalyses carbamoyl phosphate + L-aspartate = N-carbamoyl-L-aspartate + phosphate + H(+). Its pathway is pyrimidine metabolism; UMP biosynthesis via de novo pathway; (S)-dihydroorotate from bicarbonate: step 2/3. Functionally, catalyzes the condensation of carbamoyl phosphate and aspartate to form carbamoyl aspartate and inorganic phosphate, the committed step in the de novo pyrimidine nucleotide biosynthesis pathway. This chain is Aspartate carbamoyltransferase catalytic subunit, found in Bordetella bronchiseptica (strain ATCC BAA-588 / NCTC 13252 / RB50) (Alcaligenes bronchisepticus).